The sequence spans 290 residues: LVSSGQLEFIDGGVQIDPFGHSAVQAYFEVNDNSLPVQDNVELFDYNVQERVNDFVAAALSQANITRVNALYSTPSIYTDAKYATNEYWPLKTDDFFPYADRFNSGPNTDSLADALAIAQHHDAVTGTEKLAIGYQEAEELVSSSLACVQDSDGLEIESQLLPQQKVSVPPLGFSTYTVLTAKYDETGQASGAYLFRPDGTWHGNAKLTVLDGPVLDEVHQQINPWIYQITRSVLVDRPLGGSSLQDGQIELYYRIDPLGEGAKWRRSFGQEIYSPLLLAFAEQDDQDEW.

Aspartate 17 (nucleophile) is an active-site residue. A glycan (N-linked (GlcNAc...) asparagine) is linked at asparagine 64.

This sequence belongs to the glycosyl hydrolase 38 family. Dimer. Requires Zn(2+) as cofactor.

It carries out the reaction Hydrolysis of terminal, non-reducing alpha-D-mannose residues in alpha-D-mannosides.. Inhibited by swainsonine but not by 1-desoxymannojirimycin. Its function is as follows. Liberates mannose from p-nitrophenyl-alpha-D-mannoside. This is Alpha-mannosidase from Lablab purpureus (Hyacinth bean).